A 159-amino-acid chain; its full sequence is GDP-mannose mannosyl hydrolase (159 aa).

Residues F2–L3, F8, and R36 contribute to the substrate site. The Nudix hydrolase domain maps to R13–R153. 3 residues coordinate Mg(2+): G49, E69, and Q122. The short motif at G50–G71 is the Nudix box element.

Belongs to the Nudix hydrolase family. In terms of assembly, homodimer. Mg(2+) is required as a cofactor.

The enzyme catalyses GDP-alpha-D-mannose + H2O = D-mannose + GDP + H(+). In terms of biological role, hydrolyzes GDP-mannose. The protein is GDP-mannose mannosyl hydrolase of Escherichia coli O157:H7.